The primary structure comprises 166 residues: Glutamyl-tRNA(Gln) amidotransferase subunit C, mitochondrial (166 aa).

Residues 1–44 (MIRGWTIFTLCKPSALVGSSHFNKQFNWAKSQLQFATKVPQQPY) constitute a mitochondrion transit peptide.

This sequence belongs to the GatC family. Subunit of the heterotrimeric GatCAB amidotransferase (AdT) complex, composed of A, B and C subunits.

The protein resides in the mitochondrion. It catalyses the reaction L-glutamyl-tRNA(Gln) + L-glutamine + ATP + H2O = L-glutaminyl-tRNA(Gln) + L-glutamate + ADP + phosphate + H(+). In terms of biological role, allows the formation of correctly charged Gln-tRNA(Gln) through the transamidation of misacylated Glu-tRNA(Gln) in the mitochondria. The reaction takes place in the presence of glutamine and ATP through an activated gamma-phospho-Glu-tRNA(Gln). This Anopheles darlingi (Mosquito) protein is Glutamyl-tRNA(Gln) amidotransferase subunit C, mitochondrial.